The sequence spans 160 residues: MHTLLETLLESNVINIAILVVILIRFARQVVGEILVQRQQQVKEALEEASNRLKLAEQQLKTAQEEWSQTQEQINQIEEEANQTAQVVKEYWLKQANEAIAQLKTKTQQSLSQASRQVAKQIRQTLIELAIEKVKQTPIDGSQILDRHISLLSYHEAKNR.

Residues 12-31 (NVINIAILVVILIRFARQVV) form a helical membrane-spanning segment.

Belongs to the ATPase B chain family. As to quaternary structure, F-type ATPases have 2 components, F(1) - the catalytic core - and F(0) - the membrane proton channel. F(1) has five subunits: alpha(3), beta(3), gamma(1), delta(1), epsilon(1). F(0) has four main subunits: a(1), b(1), b'(1) and c(10-14). The alpha and beta chains form an alternating ring which encloses part of the gamma chain. F(1) is attached to F(0) by a central stalk formed by the gamma and epsilon chains, while a peripheral stalk is formed by the delta, b and b' chains.

It is found in the plastid. Its subcellular location is the chloroplast thylakoid membrane. F(1)F(0) ATP synthase produces ATP from ADP in the presence of a proton or sodium gradient. F-type ATPases consist of two structural domains, F(1) containing the extramembraneous catalytic core and F(0) containing the membrane proton channel, linked together by a central stalk and a peripheral stalk. During catalysis, ATP synthesis in the catalytic domain of F(1) is coupled via a rotary mechanism of the central stalk subunits to proton translocation. In terms of biological role, component of the F(0) channel, it forms part of the peripheral stalk, linking F(1) to F(0). The protein is ATP synthase subunit b, chloroplastic of Cyanidioschyzon merolae (strain NIES-3377 / 10D) (Unicellular red alga).